A 254-amino-acid polypeptide reads, in one-letter code: Zinc transporter GufA (254 aa).

7 helical membrane passes run 4-24 (GLVA…PVLV), 74-94 (VAAG…LMPH), 112-132 (ALLF…AVGV), 143-163 (LSVA…VALA), 176-196 (FLAL…VLAL), 198-218 (LSSA…LYVI), and 234-254 (EATT…MSLG). Zn(2+) is bound by residues Asn123, Glu126, Gln152, Asn153, Glu156, and Glu185.

Belongs to the ZIP transporter (TC 2.A.5) family. In terms of assembly, homodimer.

It localises to the cell inner membrane. Its function is as follows. Mediates the uptake of Zn(2+). The protein is Zinc transporter GufA (gufA) of Myxococcus xanthus.